Here is a 353-residue protein sequence, read N- to C-terminus: MLDYDALVDQALQLLEQNINKNYRVCIGIIGPPGSGKSTVAEKLKEKINSRYHDYLAHEHHAEVAVRPLSSAIDLTGDLSVANKELQAEIKAGFYSHVEDNNFKPVQVKESDGSTLIVGRGGLDNAVRIKPLRKEANLSPTKPDIAQIVPMDGFHLSRKHLDHFKDPTVAHLRRGSPFTFDSNNFLQLCKVLSKTCSLDPNYHSTGPETVNEDNTNSLFDNVTNSFIDLPEISFPGFDHAIKDPVADQHTVHKFTRILILEGLYLLLNQENWSLIYDAIASTGAFIFWNIVIDEDVIEQRVAKRHVKSGICLSLEEGIQRFRANDQINGRLIQSQSVRNANKNVKNVYDIRND.

31 to 39 (GPPGSGKST) provides a ligand contact to ATP.

Belongs to the YFH7 family.

Functionally, ATP-dependent kinase that could be involved in endoplasmic reticulum membrane assembly. The polypeptide is ATP-dependent kinase YFH7 (YFH7) (Kluyveromyces lactis (strain ATCC 8585 / CBS 2359 / DSM 70799 / NBRC 1267 / NRRL Y-1140 / WM37) (Yeast)).